Here is a 93-residue protein sequence, read N- to C-terminus: EDIWKKFELLPTPPLSPSRAALPGDPGELGAVAGDCSLMGFGLTDPLDWASELLLLPGDDIWGASDGDLFGSVLDTTDNSIIIQDCMWSGFSA.

Efficient DNA binding requires dimerization with another bHLH protein. Binds DNA as a heterodimer with MAX. As to expression, barely detectable in most tissues assayed.

It is found in the nucleus. Functionally, may function as a transcription factor. The sequence is that of N-myc protein (mycn) from Danio rerio (Zebrafish).